A 405-amino-acid polypeptide reads, in one-letter code: PP2A regulatory subunit TAP46 (405 aa).

Disordered stretches follow at residues 159 to 189 (ERRG…SEEE) and 352 to 405 (ATTS…TPCG). Over residues 165–174 (TKASALSTPV) the composition is skewed to polar residues. Acidic residues-rich tracts occupy residues 176 to 189 (SGED…SEEE) and 367 to 377 (EDEEDDDEDEE). The span at 378-393 (AVMKARAFDDWKDDNP) shows a compositional bias: basic and acidic residues.

It belongs to the IGBP1/TAP42 family. As to quaternary structure, interacts with the 36 kDa catalytic subunit (subunit C) of PP2A. Interacts with PP2A1 and PP2A2. Interacts with PP2A3, PPX1 and FYPP1. Interacts with FYPP3 and ABI5. Interacts with ATPK1/S6K1 and ATPK2/S6K2. Interacts with TIP41L. Post-translationally, phosphorylated by TOR kinase in vitro. In terms of tissue distribution, ubiquitous. Highly expressed in seed, and particularly in the embryo.

In terms of biological role, involved in the positive regulation of the TOR signaling pathway. Acts as a negative regulator of PP2A catalytic activity. Plays a positive role in the ABA-regulated inhibition of germination, probably throught its interaction with ABI5. In Arabidopsis thaliana (Mouse-ear cress), this protein is PP2A regulatory subunit TAP46.